Here is a 336-residue protein sequence, read N- to C-terminus: Inositol 2-dehydrogenase (336 aa).

This sequence belongs to the Gfo/Idh/MocA family. As to quaternary structure, homotetramer.

It catalyses the reaction myo-inositol + NAD(+) = scyllo-inosose + NADH + H(+). Involved in the oxidation of myo-inositol (MI) to 2-keto-myo-inositol (2KMI or 2-inosose). The chain is Inositol 2-dehydrogenase from Acidiphilium cryptum (strain JF-5).